A 421-amino-acid polypeptide reads, in one-letter code: Probable acid phosphatase (421 aa).

Residue Asp229 is the Proton donor of the active site.

The catalysed reaction is a phosphate monoester + H2O = an alcohol + phosphate. The chain is Probable acid phosphatase from Kluyveromyces lactis (strain ATCC 8585 / CBS 2359 / DSM 70799 / NBRC 1267 / NRRL Y-1140 / WM37) (Yeast).